A 314-amino-acid chain; its full sequence is tRNA dimethylallyltransferase (314 aa).

Position 12 to 19 (G12 to T19) interacts with ATP. T14 to T19 lines the substrate pocket. Interaction with substrate tRNA regions lie at residues D37–L40, Q161–R165, and R244–R249.

It belongs to the IPP transferase family. In terms of assembly, monomer. Requires Mg(2+) as cofactor.

It carries out the reaction adenosine(37) in tRNA + dimethylallyl diphosphate = N(6)-dimethylallyladenosine(37) in tRNA + diphosphate. Catalyzes the transfer of a dimethylallyl group onto the adenine at position 37 in tRNAs that read codons beginning with uridine, leading to the formation of N6-(dimethylallyl)adenosine (i(6)A). This chain is tRNA dimethylallyltransferase, found in Janthinobacterium sp. (strain Marseille) (Minibacterium massiliensis).